The following is a 488-amino-acid chain: NAD-reducing hydrogenase HoxS subunit beta (488 aa).

Positions 62, 65, 458, and 461 each coordinate Ni(2+).

Belongs to the [NiFe]/[NiFeSe] hydrogenase large subunit family. Tetramer of an alpha and a gamma subunits (flavin-containing dimer), and a delta and a nickel-containing beta subunits (hydrogenase dimer). FMN is required as a cofactor. The cofactor is Ni(2+).

It localises to the cytoplasm. The enzyme catalyses H2 + NAD(+) = NADH + H(+). This is NAD-reducing hydrogenase HoxS subunit beta (hoxH) from Cupriavidus necator (strain ATCC 17699 / DSM 428 / KCTC 22496 / NCIMB 10442 / H16 / Stanier 337) (Ralstonia eutropha).